Reading from the N-terminus, the 99-residue chain is DNA-binding protein Fis (99 aa).

A DNA-binding region (H-T-H motif) is located at residues 75 to 94 (QTRAASIMGINRSTLRKKLK).

Belongs to the transcriptional regulatory Fis family. Homodimer.

In terms of biological role, activates ribosomal RNA transcription. Plays a direct role in upstream activation of rRNA promoters. The polypeptide is DNA-binding protein Fis (Buchnera aphidicola subsp. Schizaphis graminum (strain Sg)).